The sequence spans 230 residues: Demethylmenaquinone methyltransferase (230 aa).

S-adenosyl-L-methionine contacts are provided by residues threonine 57, aspartate 77, 101–102 (DI), and serine 118.

The protein belongs to the class I-like SAM-binding methyltransferase superfamily. MenG/UbiE family.

It catalyses the reaction a 2-demethylmenaquinol + S-adenosyl-L-methionine = a menaquinol + S-adenosyl-L-homocysteine + H(+). The protein operates within quinol/quinone metabolism; menaquinone biosynthesis; menaquinol from 1,4-dihydroxy-2-naphthoate: step 2/2. Its function is as follows. Methyltransferase required for the conversion of demethylmenaquinol (DMKH2) to menaquinol (MKH2). In Chlamydia caviae (strain ATCC VR-813 / DSM 19441 / 03DC25 / GPIC) (Chlamydophila caviae), this protein is Demethylmenaquinone methyltransferase.